The chain runs to 631 residues: Phosphomethylpyrimidine synthase (631 aa).

Substrate contacts are provided by residues Asn-239, Met-268, Tyr-297, His-333, 353 to 355, 394 to 397, and Glu-433; these read SRG and DGLR. Position 437 (His-437) interacts with Zn(2+). Tyr-460 provides a ligand contact to substrate. Residue His-501 participates in Zn(2+) binding. [4Fe-4S] cluster contacts are provided by Cys-581, Cys-584, and Cys-589.

The protein belongs to the ThiC family. As to quaternary structure, homodimer. Requires [4Fe-4S] cluster as cofactor.

The catalysed reaction is 5-amino-1-(5-phospho-beta-D-ribosyl)imidazole + S-adenosyl-L-methionine = 4-amino-2-methyl-5-(phosphooxymethyl)pyrimidine + CO + 5'-deoxyadenosine + formate + L-methionine + 3 H(+). It functions in the pathway cofactor biosynthesis; thiamine diphosphate biosynthesis. Functionally, catalyzes the synthesis of the hydroxymethylpyrimidine phosphate (HMP-P) moiety of thiamine from aminoimidazole ribotide (AIR) in a radical S-adenosyl-L-methionine (SAM)-dependent reaction. In Shigella boydii serotype 4 (strain Sb227), this protein is Phosphomethylpyrimidine synthase.